Consider the following 354-residue polypeptide: Serum paraoxonase/lactonase 3 (354 aa).

Asn-29 is a glycosylation site (N-linked (GlcNAc...) asparagine). A disulfide bond links Cys-42 and Cys-352. Ca(2+) is bound by residues Glu-53 and Asp-54. His-114 acts as the Proton acceptor in catalysis. Ca(2+) is bound at residue Ile-116. Ser-165 carries the phosphoserine modification. The Ca(2+) site is built by Asn-167, Asp-168, Asn-223, Asp-268, and Asn-269. N-linked (GlcNAc...) asparagine glycans are attached at residues Asn-269 and Asn-323.

The protein belongs to the paraoxonase family. In terms of assembly, homodimer. Ca(2+) serves as cofactor. Post-translationally, the signal sequence is not cleaved.

It localises to the secreted. Its subcellular location is the extracellular space. The catalysed reaction is a phenyl acetate + H2O = a phenol + acetate + H(+). It carries out the reaction An aryl dialkyl phosphate + H2O = dialkyl phosphate + an aryl alcohol.. It catalyses the reaction an N-acyl-L-homoserine lactone + H2O = an N-acyl-L-homoserine + H(+). Functionally, has low activity towards the organophosphate paraxon and aromatic carboxylic acid esters. Rapidly hydrolyzes lactones such as statin prodrugs (e.g. lovastatin). Hydrolyzes aromatic lactones and 5- or 6-member ring lactones with aliphatic substituents but not simple lactones or those with polar substituents. This is Serum paraoxonase/lactonase 3 (PON3) from Homo sapiens (Human).